Consider the following 360-residue polypeptide: MLLLLAEFLQQFYKGFAVFQYLSLRGILGVLTALTLSLCLGPWMIRTLQMRQIGQSVRNDGPQSHLSKSGTPTMGGALILSSIGISTLLWADLSNRYVWVVLLVTLLFGAIGWVDDYRKVIEKNSRGLPSRWKYFWQSVFGLCAAIFLYTTAPSATETTLIVPMLKDVRIPLGIGFIVLTYFVIVGSSNAVNLTDGLDGLAIMPTVMVGGALGIFCYLSGNVKFAEYLLIPYVPGAGELIVFSGALIGAGLGFLWFNTYPAQVFMGDVGALALGAALGTMAVIVRQEIVLFIMGGVFVMETLSVVIQVASFKLTGRRVFRMAPIHHHFELKGWPEPRVIVRFWIITVILVLIGLATLKLR.

The next 10 membrane-spanning stretches (helical) occupy residues 25-45, 73-93, 97-117, 135-155, 170-190, 199-219, 236-256, 263-283, 288-308, and 338-358; these read RGIL…PWMI, TMGG…WADL, YVWV…VDDY, FWQS…APSA, IPLG…SSNA, GLAI…CYLS, AGEL…FLWF, VFMG…MAVI, IVLF…VIQV, and VIVR…ATLK.

Belongs to the glycosyltransferase 4 family. MraY subfamily. Requires Mg(2+) as cofactor.

Its subcellular location is the cell inner membrane. It carries out the reaction UDP-N-acetyl-alpha-D-muramoyl-L-alanyl-gamma-D-glutamyl-meso-2,6-diaminopimeloyl-D-alanyl-D-alanine + di-trans,octa-cis-undecaprenyl phosphate = di-trans,octa-cis-undecaprenyl diphospho-N-acetyl-alpha-D-muramoyl-L-alanyl-D-glutamyl-meso-2,6-diaminopimeloyl-D-alanyl-D-alanine + UMP. It functions in the pathway cell wall biogenesis; peptidoglycan biosynthesis. Functionally, catalyzes the initial step of the lipid cycle reactions in the biosynthesis of the cell wall peptidoglycan: transfers peptidoglycan precursor phospho-MurNAc-pentapeptide from UDP-MurNAc-pentapeptide onto the lipid carrier undecaprenyl phosphate, yielding undecaprenyl-pyrophosphoryl-MurNAc-pentapeptide, known as lipid I. The sequence is that of Phospho-N-acetylmuramoyl-pentapeptide-transferase from Pseudomonas savastanoi pv. phaseolicola (strain 1448A / Race 6) (Pseudomonas syringae pv. phaseolicola (strain 1448A / Race 6)).